A 354-amino-acid chain; its full sequence is Peptide chain release factor 1 (354 aa).

Q231 is modified (N5-methylglutamine). Residues E284–R304 are compositionally biased toward basic and acidic residues. The disordered stretch occupies residues E284–F308.

Belongs to the prokaryotic/mitochondrial release factor family. Post-translationally, methylated by PrmC. Methylation increases the termination efficiency of RF1.

The protein localises to the cytoplasm. Its function is as follows. Peptide chain release factor 1 directs the termination of translation in response to the peptide chain termination codons UAG and UAA. The chain is Peptide chain release factor 1 from Nitratiruptor sp. (strain SB155-2).